The primary structure comprises 196 residues: Imidazoleglycerol-phosphate dehydratase (196 aa).

Belongs to the imidazoleglycerol-phosphate dehydratase family.

Its subcellular location is the cytoplasm. The enzyme catalyses D-erythro-1-(imidazol-4-yl)glycerol 3-phosphate = 3-(imidazol-4-yl)-2-oxopropyl phosphate + H2O. Its pathway is amino-acid biosynthesis; L-histidine biosynthesis; L-histidine from 5-phospho-alpha-D-ribose 1-diphosphate: step 6/9. The chain is Imidazoleglycerol-phosphate dehydratase from Ralstonia pickettii (strain 12J).